The following is a 104-amino-acid chain: MSKANQKIRIRLKGYDHKAVDQSAEKIVATAKKSGAEVSGPIPLPTEKQIITILRAVHKYKDAREQFEMRTHKRLIDILSPTPKTVDLLMRLDLPAGVDIEIKL.

It belongs to the universal ribosomal protein uS10 family. In terms of assembly, part of the 30S ribosomal subunit.

Its function is as follows. Involved in the binding of tRNA to the ribosomes. The chain is Small ribosomal subunit protein uS10 from Alkaliphilus metalliredigens (strain QYMF).